A 399-amino-acid chain; its full sequence is uncharacterized protein (399 aa).

The protein belongs to the TelA family.

This is an uncharacterized protein from Listeria monocytogenes serovar 1/2a (strain ATCC BAA-679 / EGD-e).